Consider the following 189-residue polypeptide: Resolvase (189 aa).

Residues 1 to 139 enclose the Resolvase/invertase-type recombinase catalytic domain; it reads MLVGYARVST…EGLKSAKARG (139 aa). S9 acts as the O-(5'-phospho-DNA)-serine intermediate in catalysis. The segment at 130–151 is disordered; the sequence is EGLKSAKARGRNGGRPSKRNDK. Positions 165–184 form a DNA-binding region, H-T-H motif; sequence IVDIVKQTGLSRATVYRVLN.

It belongs to the site-specific recombinase resolvase family.

A likely role for the res protein would be to stabilize pIP404 by reducing the number of plasmid multimers resulting from homologous recombination. In Clostridium perfringens, this protein is Resolvase (res).